Consider the following 814-residue polypeptide: DNA replication licensing factor Mcm6 (814 aa).

The C4-type zinc finger occupies Cys-152–Cys-179. One can recognise an MCM domain in the interval Leu-339–Ile-545. Positions 392, 393, 394, 395, 396, and 497 each coordinate ATP. The short motif at Ser-521–Asp-524 is the Arginine finger element. Positions 612 and 615 each coordinate ADP. Residues Asp-656–Ala-696 form a disordered region. Positions Leu-659–Glu-679 are enriched in acidic residues.

This sequence belongs to the MCM family. Component of the Mcm2-7 complex. The complex forms a toroidal hexameric ring with the proposed subunit order Mcm2-Mcm6-Mcm4-Mcm7-Mcm3-Mcm5 (By simililarity). The heterodimers of Mcm4/Mcm6 and Mcm3/Mcm5 interact with Mcm2 and Mcm7.

Its subcellular location is the nucleus. The enzyme catalyses ATP + H2O = ADP + phosphate + H(+). Its function is as follows. Acts as a component of the MCM2-7 complex (MCM complex) which is the replicative helicase essential for 'once per cell cycle' DNA replication initiation and elongation in eukaryotic cells. Core component of CDC45-MCM-GINS (CMG) helicase, the molecular machine that unwinds template DNA during replication, and around which the replisome is built. The active ATPase sites in the MCM2-7 ring are formed through the interaction surfaces of two neighboring subunits such that a critical structure of a conserved arginine finger motif is provided in trans relative to the ATP-binding site of the Walker A box of the adjacent subunit. The six ATPase active sites, however, are likely to contribute differentially to the complex helicase activity. The chain is DNA replication licensing factor Mcm6 from Anopheles gambiae (African malaria mosquito).